The chain runs to 384 residues: Stress response protein bis1 (384 aa).

Disordered regions lie at residues 1–22 (MSLA…NKEQ) and 344–384 (SPLH…PKRV).

This sequence belongs to the ESS2 family. In terms of assembly, heterodimer with ish1.

The protein localises to the nucleus. It is found in the cytoplasm. It localises to the cytoskeleton. The protein resides in the spindle. Has a role in maintaining cell viability during stationary phase induced by stress response. May be involved in pre-mRNA splicing. In Schizosaccharomyces pombe (strain 972 / ATCC 24843) (Fission yeast), this protein is Stress response protein bis1 (bis1).